Reading from the N-terminus, the 500-residue chain is MDFETLLSYEWGVMMPEFIILGVAVALSLIDLFMPENRNRQLLGLFAFVGIAVSFVSLLSLWTSDVTSILGDTFRLDSFAKSFKALLLIGSALVLLLSIHYEPKERIAYRGEFYYLFLTALLGAMMMASSGDLITLFVGLELLSISSYILVAIRKKHTLANEAALKYVITGSIATAITLFGMSYIFGFTGSTNIKEIAVQLASTSDENHQYVLSLAFLLTFVGLSFKLASAPFHMWAPDVYQGATTPVVSFLSVVSKTAGFVIVLRVIVSVFAQTPAGSSASMLMTFAPYIAFLSGATMIIGNTIALRQRNVKRMLAYSSVAHAGYVLVAFASLSMFMFEAIWFYLLAYVFMTIGAFAILQVVSQHPDDEDISIFAGLYRRSPLMAIAMTIFLLSLAGIPGTAGFIGKMNIFLGAFVVEPAHYVLASIMVITTIISYVYYFGIFVQMFFRPVEHTHRLEWPPGVIAVVVICVIGTVLLGVFPNIAYDFLAPFQHFSDFLQ.

A run of 14 helical transmembrane segments spans residues 13–33 (VMMP…IDLF), 42–62 (LLGL…LSLW), 79–99 (FAKS…LLSI), 111–131 (GEFY…ASSG), 133–153 (LITL…LVAI), 168–188 (VITG…IFGF), 211–231 (YVLS…LASA), 245–265 (TTPV…VIVL), 281–301 (ASML…TMII), 321–341 (VAHA…MFEA), 342–362 (IWFY…ILQV), 386–406 (AIAM…AGFI), 424–444 (VLAS…FGIF), and 461–481 (PPGV…LGVF).

This sequence belongs to the complex I subunit 2 family. As to quaternary structure, NDH-1 is composed of 14 different subunits. Subunits NuoA, H, J, K, L, M, N constitute the membrane sector of the complex.

It localises to the cell membrane. The catalysed reaction is a quinone + NADH + 5 H(+)(in) = a quinol + NAD(+) + 4 H(+)(out). In terms of biological role, NDH-1 shuttles electrons from NADH, via FMN and iron-sulfur (Fe-S) centers, to quinones in the respiratory chain. The immediate electron acceptor for the enzyme in this species is believed to be a menaquinone. Couples the redox reaction to proton translocation (for every two electrons transferred, four hydrogen ions are translocated across the cytoplasmic membrane), and thus conserves the redox energy in a proton gradient. In Anoxybacillus flavithermus (strain DSM 21510 / WK1), this protein is NADH-quinone oxidoreductase subunit N.